Consider the following 130-residue polypeptide: S-adenosylmethionine decarboxylase proenzyme (130 aa).

Ser64 acts as the Schiff-base intermediate with substrate; via pyruvic acid in catalysis. Ser64 bears the Pyruvic acid (Ser); by autocatalysis mark. His69 acts as the Proton acceptor; for processing activity in catalysis. Cys84 serves as the catalytic Proton donor; for catalytic activity.

It belongs to the prokaryotic AdoMetDC family. Type 1 subfamily. As to quaternary structure, heterotetramer of two alpha and two beta chains arranged as a dimer of alpha/beta heterodimers. Requires pyruvate as cofactor. Post-translationally, is synthesized initially as an inactive proenzyme. Formation of the active enzyme involves a self-maturation process in which the active site pyruvoyl group is generated from an internal serine residue via an autocatalytic post-translational modification. Two non-identical subunits are generated from the proenzyme in this reaction, and the pyruvate is formed at the N-terminus of the alpha chain, which is derived from the carboxyl end of the proenzyme. The post-translation cleavage follows an unusual pathway, termed non-hydrolytic serinolysis, in which the side chain hydroxyl group of the serine supplies its oxygen atom to form the C-terminus of the beta chain, while the remainder of the serine residue undergoes an oxidative deamination to produce ammonia and the pyruvoyl group blocking the N-terminus of the alpha chain.

It catalyses the reaction S-adenosyl-L-methionine + H(+) = S-adenosyl 3-(methylsulfanyl)propylamine + CO2. It functions in the pathway amine and polyamine biosynthesis; S-adenosylmethioninamine biosynthesis; S-adenosylmethioninamine from S-adenosyl-L-methionine: step 1/1. Functionally, catalyzes the decarboxylation of S-adenosylmethionine to S-adenosylmethioninamine (dcAdoMet), the propylamine donor required for the synthesis of the polyamines spermine and spermidine from the diamine putrescine. This chain is S-adenosylmethionine decarboxylase proenzyme, found in Picrophilus torridus (strain ATCC 700027 / DSM 9790 / JCM 10055 / NBRC 100828 / KAW 2/3).